The primary structure comprises 163 residues: Protein-export protein SecB (163 aa).

This sequence belongs to the SecB family. In terms of assembly, homotetramer, a dimer of dimers. One homotetramer interacts with 1 SecA dimer.

The protein resides in the cytoplasm. In terms of biological role, one of the proteins required for the normal export of preproteins out of the cell cytoplasm. It is a molecular chaperone that binds to a subset of precursor proteins, maintaining them in a translocation-competent state. It also specifically binds to its receptor SecA. This chain is Protein-export protein SecB, found in Brucella abortus (strain S19).